The following is a 265-amino-acid chain: Probable cell division protein kinase ECU08_0230 (265 aa).

Residues 4 to 263 (YILGALIGSG…IMEILENEYG (260 aa)) form the Protein kinase domain. Residues 10–18 (IGSGTYGEV) and Lys-33 each bind ATP. Asp-121 serves as the catalytic Proton acceptor.

The protein belongs to the protein kinase superfamily. CMGC Ser/Thr protein kinase family. CDC2/CDKX subfamily.

The protein localises to the nucleus. It catalyses the reaction L-seryl-[protein] + ATP = O-phospho-L-seryl-[protein] + ADP + H(+). It carries out the reaction L-threonyl-[protein] + ATP = O-phospho-L-threonyl-[protein] + ADP + H(+). May play a role in the control of the eukaryotic cell cycle. This chain is Probable cell division protein kinase ECU08_0230, found in Encephalitozoon cuniculi (strain GB-M1) (Microsporidian parasite).